A 178-amino-acid chain; its full sequence is 6,7-dimethyl-8-ribityllumazine synthase (178 aa).

5-amino-6-(D-ribitylamino)uracil is bound by residues tyrosine 27, 58–60 (SLE), and 82–84 (CVI). 87–88 (AT) lines the (2S)-2-hydroxy-3-oxobutyl phosphate pocket. The Proton donor role is filled by histidine 90. Residue asparagine 114 participates in 5-amino-6-(D-ribitylamino)uracil binding. Arginine 128 contacts (2S)-2-hydroxy-3-oxobutyl phosphate.

This sequence belongs to the DMRL synthase family.

The catalysed reaction is (2S)-2-hydroxy-3-oxobutyl phosphate + 5-amino-6-(D-ribitylamino)uracil = 6,7-dimethyl-8-(1-D-ribityl)lumazine + phosphate + 2 H2O + H(+). The protein operates within cofactor biosynthesis; riboflavin biosynthesis; riboflavin from 2-hydroxy-3-oxobutyl phosphate and 5-amino-6-(D-ribitylamino)uracil: step 1/2. Catalyzes the formation of 6,7-dimethyl-8-ribityllumazine by condensation of 5-amino-6-(D-ribitylamino)uracil with 3,4-dihydroxy-2-butanone 4-phosphate. This is the penultimate step in the biosynthesis of riboflavin. This Jannaschia sp. (strain CCS1) protein is 6,7-dimethyl-8-ribityllumazine synthase.